The sequence spans 374 residues: Homoserine O-acetyltransferase (374 aa).

In terms of domain architecture, AB hydrolase-1 spans 45 to 353; that stretch reads NAILVLHALT…PYGHDAFLIE (309 aa). Residue serine 151 is the Nucleophile of the active site. Arginine 220 is a substrate binding site. Active-site residues include aspartate 314 and histidine 347. Aspartate 348 provides a ligand contact to substrate.

This sequence belongs to the AB hydrolase superfamily. MetX family. In terms of assembly, homodimer.

The protein localises to the cytoplasm. The enzyme catalyses L-homoserine + acetyl-CoA = O-acetyl-L-homoserine + CoA. Its pathway is amino-acid biosynthesis; L-methionine biosynthesis via de novo pathway; O-acetyl-L-homoserine from L-homoserine: step 1/1. In terms of biological role, transfers an acetyl group from acetyl-CoA to L-homoserine, forming acetyl-L-homoserine. This is Homoserine O-acetyltransferase from Moorella thermoacetica (strain ATCC 39073 / JCM 9320).